A 254-amino-acid polypeptide reads, in one-letter code: PF03932 family protein CutC (254 aa).

Belongs to the CutC family.

The protein resides in the cytoplasm. This is PF03932 family protein CutC from Yersinia pestis bv. Antiqua (strain Angola).